A 127-amino-acid chain; its full sequence is Apolipoprotein C-IV (127 aa).

The signal sequence occupies residues 1–27; it reads MSLLRNRLQDLPALCLCVLVLACIGAC. The N-linked (GlcNAc...) asparagine glycan is linked to Asn63.

Belongs to the apolipoprotein C4 family.

Its subcellular location is the secreted. In terms of biological role, may participate in lipoprotein metabolism. The polypeptide is Apolipoprotein C-IV (APOC4) (Colobus guereza (Mantled guereza)).